The sequence spans 496 residues: Anaerobic nitric oxide reductase flavorubredoxin (496 aa).

The segment at 30–210 is zinc metallo-hydrolase; sequence TKGTSYNSYL…PFSALVTAKI (181 aa). Residues His79, Glu81, Asp83, His147, Asp166, and His227 each coordinate Fe cation. One can recognise a Flavodoxin-like domain in the interval 254 to 393; it reads ITIFYDSMSN…LCREHGQFIA (140 aa). FMN-binding positions include 260-264 and 342-369; these read SMSNN and AFGS…ETAV. The region spanning 444 to 495 is the Rubredoxin-like domain; that stretch reads KQCMLCSVCNWVYDPEIGEPNQGVEPNTPWSSVPNDFLCPECHLGKDVFVEI. Fe cation-binding residues include Cys449, Cys452, Cys482, and Cys485.

It in the N-terminal section; belongs to the zinc metallo-hydrolase group 3 family. Homotetramer. Requires Fe cation as cofactor. It depends on FMN as a cofactor.

The protein localises to the cytoplasm. It functions in the pathway nitrogen metabolism; nitric oxide reduction. In terms of biological role, anaerobic nitric oxide reductase; uses NADH to detoxify nitric oxide (NO), protecting several 4Fe-4S NO-sensitive enzymes. Has at least 2 reductase partners, only one of which (NorW, flavorubredoxin reductase) has been identified. NO probably binds to the di-iron center; electrons enter from the NorW at rubredoxin and are transferred sequentially to the FMN center and the di-iron center. Also able to function as an aerobic oxygen reductase. This Aliivibrio fischeri (strain ATCC 700601 / ES114) (Vibrio fischeri) protein is Anaerobic nitric oxide reductase flavorubredoxin.